The primary structure comprises 126 residues: Large ribosomal subunit protein uL22 (126 aa).

It belongs to the universal ribosomal protein uL22 family. As to quaternary structure, part of the 50S ribosomal subunit.

Its function is as follows. This protein binds specifically to 23S rRNA; its binding is stimulated by other ribosomal proteins, e.g. L4, L17, and L20. It is important during the early stages of 50S assembly. It makes multiple contacts with different domains of the 23S rRNA in the assembled 50S subunit and ribosome. In terms of biological role, the globular domain of the protein is located near the polypeptide exit tunnel on the outside of the subunit, while an extended beta-hairpin is found that lines the wall of the exit tunnel in the center of the 70S ribosome. This chain is Large ribosomal subunit protein uL22, found in Rhodospirillum rubrum (strain ATCC 11170 / ATH 1.1.1 / DSM 467 / LMG 4362 / NCIMB 8255 / S1).